An 86-amino-acid chain; its full sequence is UPF0291 protein LBA1279 (86 aa).

2 stretches are compositionally biased toward basic and acidic residues: residues 1–27 (MNKD…KENE) and 65–75 (NGKEVTSEKAK). Disordered stretches follow at residues 1–36 (MNKD…EEEE) and 65–86 (NGKE…LRKD). Residues 76–86 (QAQRKKGLRKD) are compositionally biased toward basic residues.

Belongs to the UPF0291 family.

It localises to the cytoplasm. The protein is UPF0291 protein LBA1279 of Lactobacillus acidophilus (strain ATCC 700396 / NCK56 / N2 / NCFM).